A 243-amino-acid chain; its full sequence is Cell division protein FtsQ (243 aa).

The Cytoplasmic portion of the chain corresponds to 1–19 (MKRYNAKRKTHRNLKSIKK). The helical transmembrane segment at 20-40 (LIPTVLALLAFVSLLAGIITL) threads the bilayer. The Periplasmic segment spans residues 41–243 (HNPKTLPFRQ…SNGLAIQWKN (203 aa)). One can recognise a POTRA domain in the interval 46–115 (LPFRQIKITV…NELEIQVEEQ (70 aa)).

Belongs to the FtsQ/DivIB family. FtsQ subfamily. In terms of assembly, part of a complex composed of FtsB, FtsL and FtsQ.

The protein resides in the cell inner membrane. Essential cell division protein. May link together the upstream cell division proteins, which are predominantly cytoplasmic, with the downstream cell division proteins, which are predominantly periplasmic. May control correct divisome assembly. The polypeptide is Cell division protein FtsQ (Coxiella burnetii (strain RSA 493 / Nine Mile phase I)).